The chain runs to 139 residues: Protein Turandot B (139 aa).

An N-terminal signal peptide occupies residues 1–21; the sequence is MNFKTALICFALLLIGTLCSA.

It belongs to the Turandot family.

The protein resides in the secreted. In terms of biological role, a humoral factor that may play a role in stress tolerance. This chain is Protein Turandot B, found in Drosophila sechellia (Fruit fly).